The following is a 188-amino-acid chain: Murein DD-endopeptidase MepS/Murein LD-carboxypeptidase (188 aa).

Positions 1-26 (MVKSQPILRYILRGIPAIAVAVLLSA) are cleaved as a signal peptide. Cysteine 27 carries N-palmitoyl cysteine lipidation. Cysteine 27 carries the S-diacylglycerol cysteine lipid modification. Positions 64–185 (VDVKSRIMDQ…KRYNEARRVL (122 aa)) constitute a NlpC/P60 domain. Catalysis depends on cysteine 94, which acts as the Nucleophile. Histidine 145 acts as the Proton acceptor in catalysis. Residue histidine 157 is part of the active site.

The protein belongs to the peptidase C40 family. In terms of assembly, monomer.

It is found in the cell outer membrane. It carries out the reaction N-acetyl-D-glucosaminyl-N-acetylmuramoyl-L-alanyl-meso-2,6-diaminoheptanedioyl-D-alanine + H2O = N-acetyl-D-glucosaminyl-N-acetylmuramoyl-L-alanyl-meso-2,6-diaminoheptanedioate + D-alanine. Its pathway is cell wall biogenesis; cell wall polysaccharide biosynthesis. Its function is as follows. A murein DD-endopeptidase with specificity for D-Ala-meso-diaminopimelic acid (mDAP) cross-links. Its role is probably to cleave D-Ala-mDAP cross-links to allow insertion of new glycans and thus cell wall expansion. Functionally redundant with MepM and MepH. Also has weak LD-carboxypeptidase activity on L-mDAP-D-Ala peptide bonds. The sequence is that of Murein DD-endopeptidase MepS/Murein LD-carboxypeptidase (mepS) from Escherichia coli O157:H7.